The following is a 495-amino-acid chain: Glutamyl-tRNA(Gln) amidotransferase subunit A (495 aa).

Catalysis depends on charge relay system residues K78 and S159. Catalysis depends on S183, which acts as the Acyl-ester intermediate.

The protein belongs to the amidase family. GatA subfamily. As to quaternary structure, heterotrimer of A, B and C subunits.

The catalysed reaction is L-glutamyl-tRNA(Gln) + L-glutamine + ATP + H2O = L-glutaminyl-tRNA(Gln) + L-glutamate + ADP + phosphate + H(+). In terms of biological role, allows the formation of correctly charged Gln-tRNA(Gln) through the transamidation of misacylated Glu-tRNA(Gln) in organisms which lack glutaminyl-tRNA synthetase. The reaction takes place in the presence of glutamine and ATP through an activated gamma-phospho-Glu-tRNA(Gln). This chain is Glutamyl-tRNA(Gln) amidotransferase subunit A, found in Rhizorhabdus wittichii (strain DSM 6014 / CCUG 31198 / JCM 15750 / NBRC 105917 / EY 4224 / RW1) (Sphingomonas wittichii).